The chain runs to 156 residues: Ribonuclease pancreatic (156 aa).

An N-terminal signal peptide occupies residues 1–28 (MALEKSLVLLPLLVLALLVLGWIQPSLG). Substrate is bound by residues K35 and R38. The active-site Proton acceptor is H40. Intrachain disulfides connect C54–C112, C68–C123, C86–C138, and C93–C100. N62 carries an N-linked (GlcNAc...) asparagine glycan. 69–73 (KPVNT) contributes to the substrate binding site. An N-linked (GlcNAc...) asparagine glycan is attached at N90. A substrate-binding site is contributed by K94. N-linked (GlcNAc...) asparagine glycosylation is present at N104. A substrate-binding site is contributed by R113. The active-site Proton donor is H147.

It belongs to the pancreatic ribonuclease family. Monomer. Interacts with and forms tight 1:1 complexes with RNH1. Dimerization of two such complexes may occur. Interaction with RNH1 inhibits this protein.

The protein localises to the secreted. The catalysed reaction is an [RNA] containing cytidine + H2O = an [RNA]-3'-cytidine-3'-phosphate + a 5'-hydroxy-ribonucleotide-3'-[RNA].. It catalyses the reaction an [RNA] containing uridine + H2O = an [RNA]-3'-uridine-3'-phosphate + a 5'-hydroxy-ribonucleotide-3'-[RNA].. Functionally, endonuclease that catalyzes the cleavage of RNA on the 3' side of pyrimidine nucleotides. Acts on single-stranded and double-stranded RNA. The polypeptide is Ribonuclease pancreatic (RNASE1) (Lemur catta (Ring-tailed lemur)).